Consider the following 125-residue polypeptide: Small ribosomal subunit protein uS12c (125 aa).

Residues 1–23 (MPTLEHLTRSPRKKIKRKTKSPA) form a disordered region. Residues 9–20 (RSPRKKIKRKTK) show a composition bias toward basic residues.

Belongs to the universal ribosomal protein uS12 family. Part of the 30S ribosomal subunit.

The protein localises to the plastid. It is found in the chloroplast. With S4 and S5 plays an important role in translational accuracy. Located at the interface of the 30S and 50S subunits. This chain is Small ribosomal subunit protein uS12c (rps12), found in Euglena gracilis.